Reading from the N-terminus, the 222-residue chain is Thiopurine S-methyltransferase (222 aa).

W10, L45, E66, and R124 together coordinate S-adenosyl-L-methionine.

The protein belongs to the class I-like SAM-binding methyltransferase superfamily. TPMT family.

It localises to the cytoplasm. It catalyses the reaction S-adenosyl-L-methionine + a thiopurine = S-adenosyl-L-homocysteine + a thiopurine S-methylether.. The sequence is that of Thiopurine S-methyltransferase from Methylococcus capsulatus (strain ATCC 33009 / NCIMB 11132 / Bath).